We begin with the raw amino-acid sequence, 414 residues long: Serine hydroxymethyltransferase (414 aa).

Residues Leu-121 and 125–127 (GHL) contribute to the (6S)-5,6,7,8-tetrahydrofolate site. The residue at position 230 (Lys-230) is an N6-(pyridoxal phosphate)lysine.

The protein belongs to the SHMT family. As to quaternary structure, homodimer. It depends on pyridoxal 5'-phosphate as a cofactor.

The protein resides in the cytoplasm. It catalyses the reaction (6R)-5,10-methylene-5,6,7,8-tetrahydrofolate + glycine + H2O = (6S)-5,6,7,8-tetrahydrofolate + L-serine. It participates in one-carbon metabolism; tetrahydrofolate interconversion. Its pathway is amino-acid biosynthesis; glycine biosynthesis; glycine from L-serine: step 1/1. Functionally, catalyzes the reversible interconversion of serine and glycine with tetrahydrofolate (THF) serving as the one-carbon carrier. This reaction serves as the major source of one-carbon groups required for the biosynthesis of purines, thymidylate, methionine, and other important biomolecules. Also exhibits THF-independent aldolase activity toward beta-hydroxyamino acids, producing glycine and aldehydes, via a retro-aldol mechanism. This is Serine hydroxymethyltransferase from Acidithiobacillus ferrooxidans (strain ATCC 23270 / DSM 14882 / CIP 104768 / NCIMB 8455) (Ferrobacillus ferrooxidans (strain ATCC 23270)).